We begin with the raw amino-acid sequence, 1270 residues long: Breakpoint cluster region protein (1270 aa).

The stretch at 28–55 forms a coiled coil; sequence VGDIEQELERCKASIRRLEQEVNQERFR. Disordered stretches follow at residues 67-173, 201-249, 295-396, and 412-484; these read KKSY…SADA, ISSL…DYED, KSPL…RHRQ, and TGQI…LEPT. Low complexity predominate over residues 126–139; the sequence is GRPATARRPAAAAP. A phosphoserine mark is found at Ser-216 and Ser-237. The residue at position 247 (Tyr-247) is a Phosphotyrosine. Low complexity-rich tracts occupy residues 348–358 and 371–384; these read SSGQSSRVSPS and SPSQ…DSSS. Phosphoserine occurs at positions 358, 379, and 384. Thr-387 bears the Phosphothreonine mark. 2 positions are modified to phosphoserine: Ser-461 and Ser-465. Arg-473 bears the Omega-N-methylarginine mark. Ser-475 and Ser-487 each carry phosphoserine. The DH domain occupies 497-690; that stretch reads MRKWVLSGIL…QNFLSSINEE (194 aa). Tyr-553 carries the phosphotyrosine modification. Thr-640 carries the post-translational modification Phosphothreonine. A Phosphotyrosine modification is found at Tyr-643. The residue at position 692 (Thr-692) is a Phosphothreonine. The PH domain occupies 707 to 865; that stretch reads QLLKDSFMVE…WRESIREQQK (159 aa). One can recognise a C2 domain in the interval 892–1019; that stretch reads HHIPLTINKE…QDRDWQRTVI (128 aa). In terms of domain architecture, Rho-GAP spans 1053-1247; the sequence is VKIAVVTKRE…VMSQVQVLLY (195 aa). Residue Ser-1263 is modified to Phosphoserine.

In terms of assembly, homotetramer. Interacts with PDZK1. May interact with CCPG1. Interacts with HCK, FES/FPS, ABL1, PIK3R1 and GRB2. Interacts with SH2D5. Interacts with DLG4. In terms of processing, autophosphorylated. Phosphorylated by FES/FPS on tyrosine residues, leading to down-regulation of the BCR kinase activity. Phosphorylation by HCK is important for interaction with GRB2. In terms of tissue distribution, expressed in brain, including the cortex, hippocampus, cerebellum, and brainstem, as well as the spinal cord (at protein level).

The protein resides in the postsynaptic density. The protein localises to the cell projection. It is found in the dendritic spine. Its subcellular location is the axon. It localises to the synapse. The catalysed reaction is L-seryl-[protein] + ATP = O-phospho-L-seryl-[protein] + ADP + H(+). It carries out the reaction L-threonyl-[protein] + ATP = O-phospho-L-threonyl-[protein] + ADP + H(+). Protein with a unique structure having two opposing regulatory activities toward small GTP-binding proteins. The C-terminus is a GTPase-activating protein (GAP) domain which stimulates GTP hydrolysis by RAC1, RAC2 and CDC42. Accelerates the intrinsic rate of GTP hydrolysis of RAC1 or CDC42, leading to down-regulation of the active GTP-bound form. The central Dbl homology (DH) domain functions as guanine nucleotide exchange factor (GEF) that modulates the GTPases CDC42, RHOA and RAC1. Promotes the conversion of CDC42, RHOA and RAC1 from the GDP-bound to the GTP-bound form. The amino terminus contains an intrinsic kinase activity. Functions as an important negative regulator of neuronal RAC1 activity. Regulates macrophage functions such as CSF1-directed motility and phagocytosis through the modulation of RAC1 activity. Plays a major role as a RHOA GEF in keratinocytes being involved in focal adhesion formation and keratinocyte differentiation. This chain is Breakpoint cluster region protein, found in Rattus norvegicus (Rat).